The following is a 48-amino-acid chain: Delta-stichotoxin-Hmg4b (48 aa).

Intrachain disulfides connect cysteine 3–cysteine 43, cysteine 5–cysteine 33, and cysteine 26–cysteine 44.

It belongs to the sea anemone sodium channel inhibitory toxin family. Type II subfamily.

It is found in the secreted. Its subcellular location is the nematocyst. In terms of biological role, binds specifically to voltage-gated sodium channels (Nav), thereby delaying their inactivation during signal transduction. Its toxicity is greater than that of RpII (AC P01534). This chain is Delta-stichotoxin-Hmg4b, found in Heteractis magnifica (Magnificent sea anemone).